We begin with the raw amino-acid sequence, 271 residues long: Methyltransferase psoC (271 aa).

The protein belongs to the methyltransferase superfamily. LaeA methyltransferase family.

It functions in the pathway secondary metabolite biosynthesis. Functionally, methyltransferase; part of the gene cluster that mediates the biosynthesis of pseurotin A, a competitive inhibitor of chitin synthase and an inducer of nerve-cell proliferation. The PKS-NRPS hybrid synthetase psoA is responsible for the biosynthesis of azaspirene, one of the first intermediates having the 1-oxa-7-azaspiro[4,4]-non-2-ene-4,6-dione core of pseurotin, via condensation of one acetyl-CoA, 4 malonyl-CoA, and a L-phenylalanine molecule. The dual-functional monooxygenase/methyltransferase psoF seems to be involved in the addition of the C3 methyl group onto the pseurotin scaffold. Azaspirene is then converted to synerazol through 4 steps including oxidation of C17 by the cytochrome P450 monooxygenase psoD, O-methylation of the hydroxy group of C8 by the methyltransferase psoC, and the trans-to-cis isomerization of the C13 olefin by the glutathione S-transferase psoE. The fourth step of synerazol production is performed by the dual-functional monooxygenase/methyltransferase psoF which seems to catalyze the epoxidation of the intermediate deepoxy-synerazol. Synerazol can be attacked by a water molecule nonenzymatically at two different positions to yield two diol products, pseurotin A and pseurotin D. The sequence is that of Methyltransferase psoC from Aspergillus fumigatus (strain ATCC MYA-4609 / CBS 101355 / FGSC A1100 / Af293) (Neosartorya fumigata).